The sequence spans 1149 residues: Protein deacetylase HDAC6 (1149 aa).

The disordered stretch occupies residues 1-61; it reads MTSTGQDSST…KGKMKKLSQP (61 aa). The segment covering 18 to 29 has biased composition (polar residues); that stretch reads NPQSPLQESSAT. Phosphoserine is present on Ser21. The residue at position 32 (Arg32) is an Omega-N-methylarginine. Ser43 carries the phosphoserine modification. The Nuclear export signal motif lies at 66–75; that stretch reads LVVGLQGLDL. Histone deacetylase stretches follow at residues 87-403 and 481-799; these read LVFD…TLLG and GLVY…SLLG. Catalysis depends on His215, which acts as the 1. His610 functions as the 2 in the catalytic mechanism. Residues 954 to 975 form a disordered region; sequence ALGETEPTPPASHTNKQTTGAS. A phosphothreonine mark is found at Thr958, Thr961, Thr967, and Thr971. A compositionally biased stretch (polar residues) spans 964-975; sequence ASHTNKQTTGAS. Ser975 carries the phosphoserine modification. Residues 1045-1143 form a UBP-type zinc finger; that stretch reads SWCPHLMAVC…NAAHQNKFGE (99 aa). 7 residues coordinate Zn(2+): Cys1047, His1049, Cys1067, Cys1070, Cys1079, Cys1082, and Cys1087. The interval 1088–1090 is ubiquitin binding; the sequence is SRY. The Zn(2+) site is built by His1094, His1098, His1104, Cys1117, and Cys1120. The interval 1116–1123 is ubiquitin binding; sequence WCYVCQAY. Ser1148 bears the Phosphoserine mark.

This sequence belongs to the histone deacetylase family. HD type 2 subfamily. In terms of assembly, forms a trimeric complex in the nucleus consisting of BANP, HDAC6 and KHDRBS1/SAM68; HDAC6 keeps KHDRBS1 in a deacetylated state which inhibits the inclusion of CD44 alternate exons. The complex is disrupted by MAPK1/MAPK3-mediated phosphorylation of BANP which results in BANP export to the cytoplasm. This facilitates acetylation of KHDRBS1 and CD44 variant exon inclusion. Interacts with SIRT2 (via both phosphorylated, unphosphorylated, active or inactive forms); the interaction is necessary for the complex to interact with alpha-tubulin. Under proteasome impairment conditions, interacts with UBD via its histone deacetylase 1 and UBP-type zinc-finger regions. Interacts with BBIP1, CBFA2T3, CYLD, DDIT3/CHOP, ZMYND15, F-actin and HDAC11. Interacts with RIPOR2; this interaction occurs during early myogenic differentiation and prevents HDAC6 to deacetylate tubulin. Interacts with AURKA; AURKA-mediated phosphorylation of HDAC6 promotes deacetylation of alpha-tubulin. Interacts with DYSF; this interaction occurs during early myogenic differentiation. Interacts with TPPP; inhibiting the tubulin deacetylase activity of HDAC6. Interacts with DYNLL1. Interacts with ATP13A2; the interaction results in recruitment of HDAC6 to lysosomes to promote CTTN deacetylation. Interacts with CCDC141 (via the N-terminal region); inhibiting the deacetylase activity of HDAC6. Interacts with IPO7; the interaction facilitates HDAC6 nuclear translocation in dental papilla cells. Zn(2+) is required as a cofactor. Post-translationally, phosphorylated by AURKA; phosphorylation increases HDAC6-mediated deacetylation of alpha-tubulin and subsequent disassembly of cilia. Ubiquitinated. Its polyubiquitination however does not lead to its degradation. In terms of processing, sumoylated in vitro. As to expression, expressed in neurons of the cortex. Expressed in Purkinje cells. Detected in keratinocytes (at protein level).

It localises to the cytoplasm. Its subcellular location is the cytoskeleton. The protein localises to the nucleus. The protein resides in the perikaryon. It is found in the cell projection. It localises to the dendrite. Its subcellular location is the axon. The protein localises to the cilium. The protein resides in the microtubule organizing center. It is found in the centrosome. It localises to the cilium basal body. It carries out the reaction N(6)-acetyl-L-lysyl-[protein] + H2O = L-lysyl-[protein] + acetate. It catalyses the reaction N(6)-acetyl-L-lysyl-[alpha-tubulin] + H2O = L-lysyl-[alpha-tubulin] + acetate. The protein operates within protein modification; protein ubiquitination. Its function is as follows. Deacetylates a wide range of non-histone substrates. Plays a central role in microtubule-dependent cell motility by mediating deacetylation of tubulin. Required for cilia disassembly via deacetylation of alpha-tubulin. Alpha-tubulin deacetylation results in destabilization of dynamic microtubules. Promotes deacetylation of CTTN, leading to actin polymerization, promotion of autophagosome-lysosome fusion and completion of autophagy. Deacetylates SQSTM1. Deacetylates peroxiredoxins PRDX1 and PRDX2, decreasing their reducing activity. Deacetylates antiviral protein RIGI in the presence of viral mRNAs which is required for viral RNA detection by RIGI. Sequentially deacetylates and polyubiquitinates DNA mismatch repair protein MSH2 which leads to MSH2 degradation, reducing cellular sensitivity to DNA-damaging agents and decreasing cellular DNA mismatch repair activities. Deacetylates DNA mismatch repair protein MLH1 which prevents recruitment of the MutL alpha complex (formed by the MLH1-PMS2 heterodimer) to the MutS alpha complex (formed by the MSH2-MSH6 heterodimer), leading to tolerance of DNA damage. Deacetylates RHOT1/MIRO1 which blocks mitochondrial transport and mediates axon growth inhibition. Deacetylates transcription factor SP1 which leads to increased expression of ENG, positively regulating angiogenesis. Deacetylates KHDRBS1/SAM68 which regulates alternative splicing by inhibiting the inclusion of CD44 alternate exons. Promotes odontoblast differentiation following IPO7-mediated nuclear import and subsequent repression of RUNX2 expression. In addition to its protein deacetylase activity, plays a key role in the degradation of misfolded proteins: when misfolded proteins are too abundant to be degraded by the chaperone refolding system and the ubiquitin-proteasome, mediates the transport of misfolded proteins to a cytoplasmic juxtanuclear structure called aggresome. Probably acts as an adapter that recognizes polyubiquitinated misfolded proteins and target them to the aggresome, facilitating their clearance by autophagy. This Mus musculus (Mouse) protein is Protein deacetylase HDAC6.